Consider the following 376-residue polypeptide: Carbamoyl phosphate synthase small chain (376 aa).

Positions 1–187 (MKALLVLEDG…AEDGSYAWRG (187 aa)) are CPSase. 3 residues coordinate L-glutamine: S45, G239, and G241. Positions 191–376 (PLLVYDFGIK…RKIIGESAGA (186 aa)) constitute a Glutamine amidotransferase type-1 domain. The active-site Nucleophile is C266. Positions 267, 270, 308, 310, and 311 each coordinate L-glutamine. Residues H349 and E351 contribute to the active site.

This sequence belongs to the CarA family. Composed of two chains; the small (or glutamine) chain promotes the hydrolysis of glutamine to ammonia, which is used by the large (or ammonia) chain to synthesize carbamoyl phosphate. Tetramer of heterodimers (alpha,beta)4.

The enzyme catalyses hydrogencarbonate + L-glutamine + 2 ATP + H2O = carbamoyl phosphate + L-glutamate + 2 ADP + phosphate + 2 H(+). The catalysed reaction is L-glutamine + H2O = L-glutamate + NH4(+). It functions in the pathway amino-acid biosynthesis; L-arginine biosynthesis; carbamoyl phosphate from bicarbonate: step 1/1. The protein operates within pyrimidine metabolism; UMP biosynthesis via de novo pathway; (S)-dihydroorotate from bicarbonate: step 1/3. Its function is as follows. Small subunit of the glutamine-dependent carbamoyl phosphate synthetase (CPSase). CPSase catalyzes the formation of carbamoyl phosphate from the ammonia moiety of glutamine, carbonate, and phosphate donated by ATP, constituting the first step of 2 biosynthetic pathways, one leading to arginine and/or urea and the other to pyrimidine nucleotides. The small subunit (glutamine amidotransferase) binds and cleaves glutamine to supply the large subunit with the substrate ammonia. The chain is Carbamoyl phosphate synthase small chain from Desulfovibrio desulfuricans (strain ATCC 27774 / DSM 6949 / MB).